Consider the following 273-residue polypeptide: Salivary glue protein Sgs-3 (273 aa).

The N-terminal stretch at 1 to 23 (MKLTIAISLASILLLSVAHVAQG) is a signal peptide. The span at 47-57 (TTTTTTTTCAP) shows a compositional bias: low complexity. A disordered region spans residues 47-225 (TTTTTTTTCA…TPKPTNKPGC (179 aa)). Over residues 58 to 67 (PTRPPPPPCT) the composition is skewed to pro residues. Positions 83–225 (RRTTTTTRQT…TPKPTNKPGC (143 aa)) are enriched in low complexity.

The sequence is that of Salivary glue protein Sgs-3 (Sgs3) from Drosophila yakuba (Fruit fly).